The primary structure comprises 357 residues: DNA integrity scanning protein DisA (357 aa).

In terms of domain architecture, DAC spans 8–146 (VKSMINILQL…GNLRYTLKDI (139 aa)). ATP-binding positions include G75, L93, and 106-110 (MRHRT).

It belongs to the DisA family. Homooctamer. Mg(2+) is required as a cofactor.

The enzyme catalyses 2 ATP = 3',3'-c-di-AMP + 2 diphosphate. Participates in a DNA-damage check-point that is active prior to asymmetric division when DNA is damaged. DisA forms globular foci that rapidly scan along the chromosomes during sporulation, searching for lesions. When a lesion is present, DisA pauses at the lesion site. This triggers a cellular response that culminates in a temporary block in sporulation initiation. Its function is as follows. Also has diadenylate cyclase activity, catalyzing the condensation of 2 ATP molecules into cyclic di-AMP (c-di-AMP). c-di-AMP acts as a signaling molecule that couples DNA integrity with progression of sporulation. The rise in c-di-AMP level generated by DisA while scanning the chromosome, operates as a positive signal that advances sporulation; upon encountering a lesion, the DisA focus arrests at the damaged site and halts c-di-AMP synthesis. This chain is DNA integrity scanning protein DisA, found in Bacillus cereus (strain G9842).